The sequence spans 268 residues: Microtubule-associated protein RP/EB family member 1 (268 aa).

An N-acetylalanine modification is found at Ala-2. The Calponin-homology (CH) domain occupies 14-116 (NLSRHDMLAW…FVQWFKKFFD (103 aa)). An N6-crotonyllysine modification is found at Lys-66. Tyr-124 carries the post-translational modification Phosphotyrosine. Residues 124–268 (YDPVAARQGQ…GGPQEEQEEY (145 aa)) form an interaction with MTUS2/TIP150 region. The tract at residues 146–180 (LSKPKKPLGSSTAAPQRPIATQRTTAAPKAGPGMV) is disordered. The segment covering 154-170 (GSSTAAPQRPIATQRTT) has biased composition (polar residues). Ser-155 is modified (phosphoserine). One can recognise an EB1 C-terminal domain in the interval 185–255 (GVGNGDDEAA…LYATDEGFVI (71 aa)). The interval 206 to 211 (TVEDLE) is interaction with APC. Residues 208–268 (EDLEKERDFY…GGPQEEQEEY (61 aa)) form a DCTN1-binding region. An N6-acetyllysine modification is found at Lys-220. Residues 220–242 (KLRNIELICQENEGENDPVLQRI) form an APC-binding region. The tract at residues 232–255 (EGENDPVLQRIVDILYATDEGFVI) is interaction with SKA1.

This sequence belongs to the MAPRE family. Homodimer. Heterodimer with MAPRE3. Interacts (via C-terminal residues 206-211) with APC (via C-terminal residues 2674-2845); the interaction inhibits association with and bundling of F-actin. Interacts with DCTN1, DIAPH1 and DIAPH2. Interacts with DCTN2, TERF1 and dynein intermediate chain. Interacts with CLASP2, DST, KIF2C and STIM1; probably required for their targeting to the growing microtubule plus ends. Interacts with MTUS2; interaction is direct and probably targets MTUS2 to microtubules. Interacts (via C-terminus) with SKA1 (via SXIP motif); the interaction is direct and stabilizes the kinetochore-microtubule attachment of the SKA1 complex. Interacts with APC2. Interacts with CLASP1. Interacts (via C-terminus) with CLIP1. Interacts with SLAIN2 and SLAIN1. Interacts with MACF1. Interacts with KIF18B; this interaction is required for efficient accumulation of KIF18B at microtubule plus ends. Interacts with MISP. Interacts with RABL2/RABL2A; binds preferentially to GTP-bound RABL2. Interacts with KCNAB2. Interacts with KNSTRN. Interacts with NCKAP5L. Interacts with AKAP9. Interacts with PDE4DIP isoform 2/MMG8/SMYLE; this interaction is required for its recruitment to the Golgi apparatus. May form a pericentrosomal complex with AKAP9, CDK5RAP2 and PDE4DIP isoform 2/MMG8/SMYLE; within this complex, MAPRE1 binding to CDK5RAP2 may be mediated by PDE4DIP. Contrary to other mammalian species, does not interact with CDK5RAP2, possibly due to the lack of conservation of the MAPRE1-binding motif in mouse CDK5RAP2. Interacts with AKNA. Interacts with GAS2L1, GAS2L2, and GAS2L3. Interacts with RARRES1 and AGBL2. In terms of processing, acetylation at Lys-220 by KAT2B/PCAF promotes dynamic kinetochore-microtubule interactions in early mitosis. Post-translationally, crotonylated by KAT5 during mitosis, promoting astral microtubule plasticity and dynamic connection between astral microtubules and the cortex during mitotic chromosome segregation, thereby ensuring accurate spindle positioning in mitosis. Decrotonylated by HDAC3. Expressed within the midpiece of sperm tail (at protein level).

It is found in the cytoplasm. The protein localises to the cytoskeleton. The protein resides in the microtubule organizing center. Its subcellular location is the centrosome. It localises to the spindle. It is found in the spindle pole. Plus-end tracking protein (+TIP) that binds to the plus-end of microtubules and regulates the dynamics of the microtubule cytoskeleton. Recruits other +TIP proteins to microtubules by binding to a conserved Ser-X-Leu-Pro (SXLP) motif in their polypeptide chains. Promotes cytoplasmic microtubule nucleation and elongation. Involved in mitotic spindle positioning by stabilizing microtubules and promoting dynamic connection between astral microtubules and the cortex during mitotic chromosome segregation. Assists chromosome alignment in metaphase by recruiting the SKA complex to the spindle and stabilizing its interactions with microtubule bundles (K-fibers). Also acts as a regulator of minus-end microtubule organization: interacts with the complex formed by AKAP9 and PDE4DIP, leading to recruit CAMSAP2 to the Golgi apparatus, thereby tethering non-centrosomal minus-end microtubules to the Golgi, an important step for polarized cell movement. Promotes elongation of CAMSAP2-decorated microtubule stretches on the minus-end of microtubules. Acts as a regulator of autophagosome transport via interaction with CAMSAP2. Functions downstream of Rho GTPases and DIAPH1 in stable microtubule formation. May play a role in cell migration. This Mus musculus (Mouse) protein is Microtubule-associated protein RP/EB family member 1 (Mapre1).